Reading from the N-terminus, the 303-residue chain is Glutamyl-Q tRNA(Asp) synthetase (303 aa).

L-glutamate-binding positions include 9–13 (RFAPS) and glutamate 45. Positions 12-22 (PSPTGAMHLGN) match the 'HIGH' region motif. Residues cysteine 100, cysteine 102, tyrosine 125, and cysteine 129 each coordinate Zn(2+). Tyrosine 184 and arginine 202 together coordinate L-glutamate. The 'KMSKS' region signature appears at 240 to 244 (RLAKR). Lysine 243 is an ATP binding site.

This sequence belongs to the class-I aminoacyl-tRNA synthetase family. GluQ subfamily. Zn(2+) serves as cofactor.

Its function is as follows. Catalyzes the tRNA-independent activation of glutamate in presence of ATP and the subsequent transfer of glutamate onto a tRNA(Asp). Glutamate is transferred on the 2-amino-5-(4,5-dihydroxy-2-cyclopenten-1-yl) moiety of the queuosine in the wobble position of the QUC anticodon. This Deinococcus geothermalis (strain DSM 11300 / CIP 105573 / AG-3a) protein is Glutamyl-Q tRNA(Asp) synthetase.